A 1134-amino-acid chain; its full sequence is DENN domain-containing protein 2B (1134 aa).

The span at 1–13 (MTMTANKNSSITH) shows a compositional bias: polar residues. The interval 1 to 90 (MTMTANKNSS…DPSPETSPPI (90 aa)) is disordered. Phosphoserine occurs at positions 30 and 32. Positions 32-43 (SPPPVLYPPRSP) are enriched in pro residues. T228 bears the Phosphothreonine mark. Position 230 is a phosphoserine (S230). 2 disordered regions span residues 233 to 273 (SYPE…GIRK) and 289 to 571 (LKEQ…KRHS). A compositionally biased stretch (basic and acidic residues) spans 249–259 (SLYRLEKRPGR). Residues 315–348 (GTLGTLEEPTGTASVSPSSRAGGVAGVAGEAGPP) are compositionally biased toward low complexity. At T361 the chain carries Phosphothreonine. The residue at position 365 (S365) is a Phosphoserine. Positions 370-385 (LLPPKSSPDPAVNPVP) are enriched in pro residues. Over residues 389–399 (RTFEYEADKNP) the composition is skewed to basic and acidic residues. Pro residues predominate over residues 406 to 428 (GLPPSPTPAAPPPLPSTPAPPVT). Basic residues predominate over residues 429–443 (RRPKKDMRGHRKSQN). The span at 453–478 (SSLQSLYPSSPTENGTESQPKFGSKS) shows a compositional bias: polar residues. Phosphothreonine is present on T479. Composition is skewed to polar residues over residues 511–521 (KSQQLSENSLD) and 542–555 (SLKS…SGNW). S542 carries the post-translational modification Phosphoserine. The segment covering 559-570 (KSHRLPRLPKRH) has biased composition (basic residues). Phosphoserine is present on residues S571 and S619. The segment at 633–658 (LSMSSLETASLRDENSESESDSDDRF) is disordered. Residues 695-843 (EYFVVVSLKK…PFPAPGKTIK (149 aa)) form the uDENN domain. The cDENN domain maps to 865-998 (RLEHVDFECL…LQAALEQALE (134 aa)). The 94-residue stretch at 1000–1093 (KSELISQDSD…QDRELRKCRA (94 aa)) folds into the dDENN domain.

As to quaternary structure, interacts with ITSN1 and GRB2. Isoform 1 interacts with the SH3 domain of ABL1. Phosphorylated. Phosphorylation decreases ITSN1 binding.

The protein resides in the cytoplasm. Its subcellular location is the cell cortex. It localises to the cell membrane. It is found in the recycling endosome. In terms of biological role, may be involved in cytoskeletal organization and tumorogenicity. Seems to be involved in a signaling transduction pathway leading to activation of MAPK1/ERK2. Plays a role in EGFR trafficking from recycling endosomes back to the cell membrane. Functionally, guanine nucleotide exchange factor (GEF) which may activate RAB9A and RAB9B. Promotes the exchange of GDP to GTP, converting inactive GDP-bound Rab proteins into their active GTP-bound form. May block ERK2 activation stimulated by ABL1. May alter cell morphology and cell growth. In Mus musculus (Mouse), this protein is DENN domain-containing protein 2B (Dennd2b).